The primary structure comprises 295 residues: Acetylglutamate kinase (295 aa).

Substrate-binding positions include 66 to 67 (GG), Arg88, and Asn193.

Belongs to the acetylglutamate kinase family. ArgB subfamily.

The protein resides in the cytoplasm. It catalyses the reaction N-acetyl-L-glutamate + ATP = N-acetyl-L-glutamyl 5-phosphate + ADP. It participates in amino-acid biosynthesis; L-arginine biosynthesis; N(2)-acetyl-L-ornithine from L-glutamate: step 2/4. In terms of biological role, catalyzes the ATP-dependent phosphorylation of N-acetyl-L-glutamate. The protein is Acetylglutamate kinase of Afipia carboxidovorans (strain ATCC 49405 / DSM 1227 / KCTC 32145 / OM5) (Oligotropha carboxidovorans).